A 95-amino-acid polypeptide reads, in one-letter code: UPF0235 protein AnaeK_1146 (95 aa).

This sequence belongs to the UPF0235 family.

The polypeptide is UPF0235 protein AnaeK_1146 (Anaeromyxobacter sp. (strain K)).